The following is an 839-amino-acid chain: Sodium/hydrogen exchanger 3 (839 aa).

Positions 1-32 are cleaved as a signal peptide; the sequence is MPLGVRGTRREFRFPVWGLLLLALWMLPRALG. The Extracellular segment spans residues 33–56; it reads VEEIPGPDSHEKQGFQIVTFKWHH. The helical transmembrane segment at 57–79 threads the bilayer; that stretch reads VQDPYIIALWILVASLAKIVFHL. Topologically, residues 80 to 87 are cytoplasmic; the sequence is SHKVTSVV. The chain crosses the membrane as a helical span at residues 88–107; that stretch reads PESALLIVLGLILGGIVWAA. At 108–116 the chain is on the extracellular side; that stretch reads DHIASFTLT. A helical membrane pass occupies residues 117–134; that stretch reads PTVFFFYLLPPIVLDAGY. At 135-137 the chain is on the cytoplasmic side; it reads FMP. Residues 138–173 form a helical membrane-spanning segment; sequence NRLFFGNLGTILLYAVIGTVWNAATTGLSLYGVYLS. A 1,2-diacyl-sn-glycero-3-phospho-(1D-myo-inositol) contacts are provided by G143, G146, and T147. Residues 174 to 186 lie on the Extracellular side of the membrane; the sequence is GIMGDLSIGLLDF. The helical transmembrane segment at 187–208 threads the bilayer; sequence LLFGSLIAAVDPVAVLAVFEEV. At 209 to 210 the chain is on the cytoplasmic side; it reads HV. The chain crosses the membrane as a helical span at residues 211-242; sequence NDVLFIIVFGESLLNDAVTVVLYNVFDSFVSL. Topologically, residues 243–249 are extracellular; the sequence is GADKVTG. The chain crosses the membrane as a helical span at residues 250 to 284; it reads VDCVKGIVSFFVVSLGGTLIGIIFAFLLSLVTRFT. At 285–286 the chain is on the cytoplasmic side; it reads KH. A helical transmembrane segment spans residues 287–309; that stretch reads VRIIEPGFVFIISYLSYLTSEML. Over 310–311 the chain is Extracellular; sequence SL. A helical transmembrane segment spans residues 312-328; it reads SAILAITFCGICCQKYV. At 329–335 the chain is on the cytoplasmic side; sequence KANISEQ. The chain crosses the membrane as a helical span at residues 336 to 364; it reads SATTVRYTMKMLASGAETIIFMFLGISAV. Over 365-372 the chain is Extracellular; the sequence is DPAIWTWN. A helical transmembrane segment spans residues 373-394; it reads TAFILLTLVFISVYRAIGVVLQ. Residues 395-407 lie on the Cytoplasmic side of the membrane; it reads TWLLNKYRMVQLE. Position 403 (M403) interacts with a 1,2-diacyl-sn-glycero-3-phospho-(1D-myo-inositol). Residues 408-431 form a helical membrane-spanning segment; it reads IIDQVVMSYGGLRGAVAYALVVLL. Over 432–438 the chain is Extracellular; that stretch reads DEKKVKE. A helical transmembrane segment spans residues 439 to 472; the sequence is KNLFVSTTIIVVFFTVIFQGLTIKPLVQWLKVKK. Over 473–839 the chain is Cytoplasmic; sequence SEHREPKLNE…RSFLPESTHM (367 aa). Q502, I503, and H505 together coordinate a 1,2-diacyl-sn-glycero-3-phospho-(1D-myo-inositol). Phosphoserine occurs at positions 560 and 568. The tract at residues 581-595 is interaction with EZR; it reads RPSTVEASVSYLLRE. Positions 596-673 are interaction with NHERF4; the sequence is NVSTVCLDMQ…RKRLESFKST (78 aa). The interval 597-701 is interaction with AHCYL1; that stretch reads VSTVCLDMQA…GQKRRNSSIP (105 aa). 2 positions are modified to phosphoserine: S598 and S613. The residue at position 669 (S669) is a Phosphoserine; by SGK1. A compositionally biased stretch (basic residues) spans 688–697; sequence KRERGQKRRN. Positions 688-710 are disordered; it reads KRERGQKRRNSSIPNGKIPMESP. A phosphoserine mark is found at S724, S815, and S818.

It belongs to the monovalent cation:proton antiporter 1 (CPA1) transporter (TC 2.A.36) family. In terms of assembly, homodimer. Found in the forms of complex and dynamic macromolecular complexes. Binds NHERF1 and NHERF2. Interacts with CHP1, CHP2 and SHANK2. Interacts with NHERF4 and interactions decrease in response to elevated calcium ion levels. Interacts with PDZK1 (via C-terminal PDZ domain). Interacts with AHCYL1; the interaction is required for SLC9A3 activity. Interacts with EZR; interaction targets SLC9A3 to the apical membrane. Interacts with SNX27 (via PDZ domains); directs SLC9A3 membrane insertion from early endosomes to the plasma membrane. Phosphorylated by PKA, which inhibits activity. Phosphorylation at Ser-669 by SGK1 is associated with increased abundance at the cell membrane.

Its subcellular location is the apical cell membrane. The protein resides in the cell membrane. It is found in the recycling endosome membrane. The protein localises to the early endosome membrane. It catalyses the reaction Na(+)(in) + H(+)(out) = Na(+)(out) + H(+)(in). Its activity is regulated as follows. Seems to switch between active and inactive modes in response to various stimuli. Activated directly or indirectly by membrane phosphatidylinositol (PIs). Regulated by a variety of auxiliary proteins, which facilitate the maturation, cell surface expression and function of the transporter. Inhibited specifically by the drug tenapanor. Functionally, plasma membrane Na(+)/H(+) antiporter. Exchanges intracellular H(+) ions for extracellular Na(+) in 1:1 stoichiometry, playing a key role in salt and fluid absorption and pH homeostasis. Major apical Na(+)/H(+) exchanger in kidney and intestine playing an important role in renal and intestine Na(+) absorption and blood pressure regulation. This is Sodium/hydrogen exchanger 3 (SLC9A3) from Didelphis virginiana (North American opossum).